The following is a 182-amino-acid chain: Inner membrane assembly complex subunit 17 (182 aa).

Residues Met-1–Glu-45 constitute a mitochondrion transit peptide. The Mitochondrial matrix portion of the chain corresponds to Ile-46–Pro-107. Residues Leu-108 to Trp-127 form a helical membrane-spanning segment. Residues Lys-128 to Thr-158 adopt a coiled-coil conformation. The Mitochondrial intermembrane segment spans residues Lys-128–Trp-182.

This sequence belongs to the INA17 family. Component of the inner membrane assembly (INA) complex, composed of INA17 and INA22. Interacts with a subset of F(1)F(0)-ATP synthase subunits of the F(1)-domain and the peripheral stalk.

Its subcellular location is the mitochondrion inner membrane. Component of the INA complex (INAC) that promotes the biogenesis of mitochondrial F(1)F(0)-ATP synthase. INAC facilitates the assembly of the peripheral stalk and promotes the assembly of the catalytic F(1)-domain with the membrane-embedded F(0)-domain. In Saccharomyces cerevisiae (strain RM11-1a) (Baker's yeast), this protein is Inner membrane assembly complex subunit 17.